Consider the following 540-residue polypeptide: MADISTTQAWQDLTDHYSNFQATTLRELFKEENRAEKYTFSAAGLHVDLSKNLLDDATLTKLLALTEESGLRERIDAMFAGEHLNNTEDRAVLHTALRLPAEADLSVDGQDVAADVHEVLGRMRDFATALRSGNWLGYTGHTIKKIVNIGIGGSDLGPAMATKALRAYATAGISAEFVSNVDPADLVSVLEDLDAESTLFVVASKTFTTQETLSNARAARAWLVEKLGEEAVAKHFVAVSTNAEKVAEFGIDTDNMFGFWDWVGGRYSVDSAVGLSLMAVIGPRDFMRFLGGFHAMDEHFRTTKFEENVPILMALLGVWYSDFYGAETHAVLPYSEDLSRFAAYLQQLTMESNGKSVHRDGSPVSTGTGEIYWGEPGTNGQHAFFQLIHQGTRLVPADFIGFARPKQDLPAGERTMHDLLMSNFFAQTKVLAFGKNAEEIAAEGVAPELVNHKVMPGNRPTTTILAEELTPSILGALIALYEHIVMVQGVIWDINSFDQWGVELGKQQANDLAPAVSGEEDVDSGDSSTDSLIKWYRANR.

Glu351 (proton donor) is an active-site residue. Catalysis depends on residues His382 and Lys506.

This sequence belongs to the GPI family.

The protein localises to the cytoplasm. It carries out the reaction alpha-D-glucose 6-phosphate = beta-D-fructose 6-phosphate. It functions in the pathway carbohydrate biosynthesis; gluconeogenesis. It participates in carbohydrate degradation; glycolysis; D-glyceraldehyde 3-phosphate and glycerone phosphate from D-glucose: step 2/4. Its function is as follows. Catalyzes the reversible isomerization of glucose-6-phosphate to fructose-6-phosphate. The sequence is that of Glucose-6-phosphate isomerase from Corynebacterium glutamicum (strain R).